The following is a 392-amino-acid chain: Alanine--glyoxylate aminotransferase (392 aa).

T9 bears the Phosphothreonine mark. K209 carries the N6-(pyridoxal phosphate)lysine modification. K225 is modified (N6-acetyllysine; alternate). Residue K225 is modified to N6-succinyllysine; alternate. An N6-acetyllysine mark is found at K234 and K312. Residue R360 participates in substrate binding.

The protein belongs to the class-V pyridoxal-phosphate-dependent aminotransferase family. Homodimer. Requires pyridoxal 5'-phosphate as cofactor. As to expression, liver.

It localises to the peroxisome. It carries out the reaction L-serine + pyruvate = 3-hydroxypyruvate + L-alanine. The catalysed reaction is glyoxylate + L-alanine = glycine + pyruvate. Alanine--glyoxylate aminotransferase activity is inhibited by 1 mM (aminooxy)acetic acid by 97.5%. Its function is as follows. Peroxisomal aminotransferase that catalyzes the transamination of glyoxylate to glycine and contributes to the glyoxylate detoxification. Also catalyzes the transamination between L-serine and pyruvate and contributes to gluconeogenesis from the L-serine metabolism. The sequence is that of Alanine--glyoxylate aminotransferase from Homo sapiens (Human).